The following is a 196-amino-acid chain: Probable nicotinate-nucleotide adenylyltransferase (196 aa).

This sequence belongs to the NadD family.

The enzyme catalyses nicotinate beta-D-ribonucleotide + ATP + H(+) = deamido-NAD(+) + diphosphate. Its pathway is cofactor biosynthesis; NAD(+) biosynthesis; deamido-NAD(+) from nicotinate D-ribonucleotide: step 1/1. Functionally, catalyzes the reversible adenylation of nicotinate mononucleotide (NaMN) to nicotinic acid adenine dinucleotide (NaAD). This is Probable nicotinate-nucleotide adenylyltransferase from Caldicellulosiruptor bescii (strain ATCC BAA-1888 / DSM 6725 / KCTC 15123 / Z-1320) (Anaerocellum thermophilum).